We begin with the raw amino-acid sequence, 124 residues long: Ribonuclease pancreatic (124 aa).

Basic and acidic residues predominate over residues 1–13; the sequence is KESAAAKFERQHM. The interval 1–24 is disordered; that stretch reads KESAAAKFERQHMDPSMSSASSSN. Residues Lys-7 and Arg-10 each coordinate substrate. The Proton acceptor role is filled by His-12. Intrachain disulfides connect Cys-26–Cys-84, Cys-40–Cys-95, Cys-58–Cys-110, and Cys-65–Cys-72. Substrate is bound by residues 41–45, Lys-66, and Arg-85; that span reads KPVNT. His-119 acts as the Proton donor in catalysis.

This sequence belongs to the pancreatic ribonuclease family. In terms of assembly, monomer. Interacts with and forms tight 1:1 complexes with RNH1. Dimerization of two such complexes may occur. Interaction with RNH1 inhibits this protein. As to expression, pancreas.

Its subcellular location is the secreted. The enzyme catalyses an [RNA] containing cytidine + H2O = an [RNA]-3'-cytidine-3'-phosphate + a 5'-hydroxy-ribonucleotide-3'-[RNA].. It carries out the reaction an [RNA] containing uridine + H2O = an [RNA]-3'-uridine-3'-phosphate + a 5'-hydroxy-ribonucleotide-3'-[RNA].. Functionally, endonuclease that catalyzes the cleavage of RNA on the 3' side of pyrimidine nucleotides. Acts on single-stranded and double-stranded RNA. This Dama dama (Fallow deer) protein is Ribonuclease pancreatic (RNASE1).